A 71-amino-acid chain; its full sequence is Transcription modulator YdgT (71 aa).

Belongs to the Hha/YmoA/Cnu family. In terms of assembly, forms complexes with both H-NS and StpA.

Binds to H-NS and modified the range of genes it silences; H-NS alonge silences core gene while the H-NS-Hha complex (and presumably also H-NS-YdgT) silences genes acquired by horizontal gene transfer. Plays a role silencing virulence factors in the absence of factors that induce pathogenicity. The complex formed with H-NS binds to the specific 26-bp cnb site in the origin of replication oriC. The chain is Transcription modulator YdgT (ydgT) from Salmonella choleraesuis (strain SC-B67).